Consider the following 592-residue polypeptide: Colicin-A (592 aa).

Gly residues-rich tracts occupy residues 1-13 and 23-34; these read MPGFNYGGKGDGT and PEPGGGSHGNSG. Disordered stretches follow at residues 1 to 57 and 373 to 395; these read MPGF…PGDS and RQRQAEEAERQRQAMEVAEKAKD. The next 2 membrane-spanning stretches (helical) occupy residues 528 to 548 and 555 to 575; these read WVLSGIASSVALGIFSATLGA and VPAIAVGIAGILLAAVVGALI.

This sequence belongs to the channel forming colicin family.

It localises to the cell membrane. Its function is as follows. This colicin is a channel-forming colicin. This class of transmembrane toxins depolarize the cytoplasmic membrane, leading to dissipation of cellular energy. In terms of biological role, colicins are polypeptide toxins produced by and active against E.coli and closely related bacteria. The protein is Colicin-A (caa) of Citrobacter freundii.